Here is a 525-residue protein sequence, read N- to C-terminus: Matrix extracellular phosphoglycoprotein (525 aa).

A signal peptide spans 1 to 17 (MRVFCVGLLLFSVTWAA). Disordered regions lie at residues 24-95 (TEKT…NRQR), 187-216 (AKAH…THRI), and 237-525 (EGSG…SDGD). Composition is skewed to basic and acidic residues over residues 25-46 (EKTK…DNIG) and 64-73 (IVQERKKDLS). 2 stretches are compositionally biased toward polar residues: residues 75 to 95 (SEAS…NRQR) and 200 to 210 (DSQAQKSPVKS). Residues 242–264 (TDLQERGDNDISPFSGDGQPFKD) are dentonin. The Cell attachment site motif lies at 247 to 249 (RGD). O-linked (Xyl...) (chondroitin sulfate) serine glycosylation occurs at Ser-256. Composition is skewed to basic and acidic residues over residues 292–312 (ESTH…REEN) and 319–328 (TRDETAKEAD). N-linked (GlcNAc...) asparagine glycans are attached at residues Asn-477 and Asn-478. Residues 507 to 525 (RDDSSESSDSGSSSESDGD) are ASARM motif; interaction with PHEX. The span at 513–525 (SSDSGSSSESDGD) shows a compositional bias: low complexity.

It belongs to the PF07175/osteoregulin family. In terms of assembly, interacts (via the ASARM motif) with PHEX; the interaction is zinc-dependent. In terms of processing, phosphorylated on serine residues in the ASARM motif (in vitro) by FAM20C; the phosphorylation is important for the inhibition of bone mineralization. Cleaved by CTSB/cathepsin B; the cleavage is blocked by metalloprotease PHEX. In terms of tissue distribution, detected in urine (at protein level). Expressed by osteoblasts. Expressed by stem cells in dental pulp. Expressed by mesenchymal cells in dental papilla and dental pulp. Expressed in teeth, specifically in decidious dentin. Expressed in ondotoblasts. Expressed in salivary glands. Secreted from oncogenic hypophosphatemic tumors.

Its subcellular location is the secreted. The protein localises to the extracellular space. The protein resides in the extracellular matrix. Its function is as follows. Promotes renal phosphate excretion and inhibits intestinal phosphate absorption. Promotes bone mineralization by osteoblasts and cartilage mineralization by chondrocytes. Regulates the mineralization of the extracellular matrix of the craniofacial complex, such as teeth, bone and cartilage. Promotes dental pulp stem cell proliferation and differentiation. This is Matrix extracellular phosphoglycoprotein (MEPE) from Homo sapiens (Human).